The primary structure comprises 61 residues: Small ribosomal subunit protein uS14 (61 aa).

Cysteine 24, cysteine 27, cysteine 40, and cysteine 43 together coordinate Zn(2+).

This sequence belongs to the universal ribosomal protein uS14 family. Zinc-binding uS14 subfamily. In terms of assembly, part of the 30S ribosomal subunit. Contacts proteins S3 and S10. Zn(2+) is required as a cofactor.

Functionally, binds 16S rRNA, required for the assembly of 30S particles and may also be responsible for determining the conformation of the 16S rRNA at the A site. This Mycoplasma mobile (strain ATCC 43663 / 163K / NCTC 11711) (Mesomycoplasma mobile) protein is Small ribosomal subunit protein uS14.